A 473-amino-acid polypeptide reads, in one-letter code: H(+)/Cl(-) exchange transporter ClcA (473 aa).

Topologically, residues 1–32 are cytoplasmic; sequence MKTDTPSLETPQAARLRRRQLIRQLLERDKTP. Residues 33 to 69 traverse the membrane as a helical segment; it reads LAILFMAAVVGTLVGLAAVAFDKGVAWLQNQRMGALV. Residues 70 to 76 lie on the Periplasmic side of the membrane; that stretch reads HTADNYP. Residues 77-100 form a helical membrane-spanning segment; that stretch reads LLLTVAFLCSAVLAMFGYFLVRKY. A Selectivity filter part_1 motif is present at residues 106–110; sequence GSGIP. Residue serine 107 coordinates chloride. An intramembrane region (helical) is located at residues 109 to 116; the sequence is IPEIEGAL. Residues 117–123 are Cytoplasmic-facing; sequence EDQRPVR. Transmembrane regions (helical) follow at residues 124-141 and 148-166; these read WWRV…TLGG and EGPT…LDIF. The short motif at 146–150 is the Selectivity filter part_2 element; the sequence is GREGP. Residues 167–176 lie on the Cytoplasmic side of the membrane; it reads RLKGDEARHT. 2 consecutive intramembrane regions (helical) follow at residues 177–189 and 193–201; these read LLAT…LAAA and PLAGILFII. Residues 202-214 are Cytoplasmic-facing; it reads EEMRPQFRYTLIS. The helical transmembrane segment at 215–232 threads the bilayer; that stretch reads IKAVFIGVIMSTIMYRIF. The Periplasmic portion of the chain corresponds to 233-252; sequence NHEVALIDVGKLSDAPLNTL. Residues 253 to 281 form a helical membrane-spanning segment; the sequence is WLYLILGIIFGIFGPIFNKWVLGMQDLLH. The Cytoplasmic segment spans residues 282–287; it reads RVHGGN. The helical transmembrane segment at 288–309 threads the bilayer; sequence ITKWVLMGGAIGGLCGLLGFVA. Residues 310 to 329 lie on the Periplasmic side of the membrane; that stretch reads PATSGGGFNLIPIATAGNFS. 2 helical membrane-spanning segments follow: residues 330–349 and 355–376; these read MGML…LCFS and GIFA…MVAV. Positions 355–359 match the Selectivity filter part_3 motif; the sequence is GIFAP. Chloride is bound by residues isoleucine 356 and phenylalanine 357. The Periplasmic portion of the chain corresponds to 377–386; the sequence is ELFPQYHLEA. The helical intramembrane region spans 387-401; that stretch reads GTFAIAGMGALLAAS. The segment at residues 402–404 is an intramembrane region (note=Loop between two helices); sequence IRA. Residues 405-416 constitute an intramembrane region (helical); sequence PLTGIILVLEMT. The segment at residues 417–421 is an intramembrane region (note=Loop between two helices); sequence DNYQL. The helical transmembrane segment at 422 to 438 threads the bilayer; sequence ILPMIITGLGATLLAQF. Residues 439-473 lie on the Cytoplasmic side of the membrane; the sequence is TGGKPLYSAILARTLAKQEAEQLARSKAASASENT. Tyrosine 445 serves as a coordination point for chloride.

It belongs to the chloride channel (TC 2.A.49) family. ClcA subfamily. Homodimer.

It is found in the cell inner membrane. It catalyses the reaction 2 chloride(in) + H(+)(out) = 2 chloride(out) + H(+)(in). Its function is as follows. Proton-coupled chloride transporter. Functions as antiport system and exchanges two chloride ions for 1 proton. Probably acts as an electrical shunt for an outwardly-directed proton pump that is linked to amino acid decarboxylation, as part of the extreme acid resistance (XAR) response. This is H(+)/Cl(-) exchange transporter ClcA from Shigella flexneri serotype 5b (strain 8401).